We begin with the raw amino-acid sequence, 305 residues long: Elongation factor Ts (305 aa).

The interval 81–84 (TDFV) is involved in Mg(2+) ion dislocation from EF-Tu.

Belongs to the EF-Ts family.

The protein resides in the cytoplasm. Associates with the EF-Tu.GDP complex and induces the exchange of GDP to GTP. It remains bound to the aminoacyl-tRNA.EF-Tu.GTP complex up to the GTP hydrolysis stage on the ribosome. The chain is Elongation factor Ts from Nitratiruptor sp. (strain SB155-2).